The sequence spans 171 residues: Co-chaperone protein HscB (171 aa).

In terms of domain architecture, J spans 2 to 74; it reads DYFTLFGLPA…LMRAEYLLSL (73 aa).

It belongs to the HscB family. In terms of assembly, interacts with HscA and stimulates its ATPase activity. Interacts with IscU.

Its function is as follows. Co-chaperone involved in the maturation of iron-sulfur cluster-containing proteins. Seems to help targeting proteins to be folded toward HscA. The sequence is that of Co-chaperone protein HscB from Shigella boydii serotype 18 (strain CDC 3083-94 / BS512).